A 407-amino-acid chain; its full sequence is S-adenosylmethionine synthase (407 aa).

Residue Gly-140–Asp-145 participates in ATP binding.

Belongs to the AdoMet synthase 2 family. Mg(2+) is required as a cofactor.

It carries out the reaction L-methionine + ATP + H2O = S-adenosyl-L-methionine + phosphate + diphosphate. It participates in amino-acid biosynthesis; S-adenosyl-L-methionine biosynthesis; S-adenosyl-L-methionine from L-methionine: step 1/1. Its function is as follows. Catalyzes the formation of S-adenosylmethionine from methionine and ATP. The polypeptide is S-adenosylmethionine synthase (Methanosphaera stadtmanae (strain ATCC 43021 / DSM 3091 / JCM 11832 / MCB-3)).